Reading from the N-terminus, the 342-residue chain is Phosphate acyltransferase (342 aa).

This sequence belongs to the PlsX family. In terms of assembly, homodimer. Probably interacts with PlsY.

It localises to the cytoplasm. The enzyme catalyses a fatty acyl-[ACP] + phosphate = an acyl phosphate + holo-[ACP]. It participates in lipid metabolism; phospholipid metabolism. Catalyzes the reversible formation of acyl-phosphate (acyl-PO(4)) from acyl-[acyl-carrier-protein] (acyl-ACP). This enzyme utilizes acyl-ACP as fatty acyl donor, but not acyl-CoA. The chain is Phosphate acyltransferase from Legionella pneumophila (strain Paris).